The following is a 598-amino-acid chain: UvrABC system protein C (598 aa).

The 78-residue stretch at 14 to 91 (DSPGCYLHKD…IQKNMPKYNI (78 aa)) folds into the GIY-YIG domain. One can recognise a UVR domain in the interval 196-231 (DKIIEDLRSKMLAASEEMAFERAAEYRDLISGIATM).

Belongs to the UvrC family. Interacts with UvrB in an incision complex.

Its subcellular location is the cytoplasm. The UvrABC repair system catalyzes the recognition and processing of DNA lesions. UvrC both incises the 5' and 3' sides of the lesion. The N-terminal half is responsible for the 3' incision and the C-terminal half is responsible for the 5' incision. The polypeptide is UvrABC system protein C (Streptococcus pyogenes serotype M28 (strain MGAS6180)).